A 132-amino-acid polypeptide reads, in one-letter code: L-ectoine synthase (132 aa).

Belongs to the ectoine synthase family.

The catalysed reaction is (2S)-4-acetamido-2-aminobutanoate = L-ectoine + H2O. Its pathway is amine and polyamine biosynthesis; ectoine biosynthesis; L-ectoine from L-aspartate 4-semialdehyde: step 3/3. Functionally, catalyzes the circularization of gamma-N-acetyl-alpha,gamma-diaminobutyric acid (ADABA) to ectoine (1,4,5,6-tetrahydro-2-methyl-4-pyrimidine carboxylic acid), which is an excellent osmoprotectant. This chain is L-ectoine synthase, found in Rhodococcus opacus (strain B4).